The primary structure comprises 173 residues: Regulatory protein RecX (173 aa).

It belongs to the RecX family.

Its subcellular location is the cytoplasm. In terms of biological role, modulates RecA activity. The protein is Regulatory protein RecX of Mycobacterium avium (strain 104).